We begin with the raw amino-acid sequence, 251 residues long: Hydroxyacylglutathione hydrolase (251 aa).

Residues His-53, His-55, Asp-57, His-58, His-110, Asp-127, and His-165 each coordinate Zn(2+).

It belongs to the metallo-beta-lactamase superfamily. Glyoxalase II family. As to quaternary structure, monomer. Zn(2+) is required as a cofactor.

It catalyses the reaction an S-(2-hydroxyacyl)glutathione + H2O = a 2-hydroxy carboxylate + glutathione + H(+). The protein operates within secondary metabolite metabolism; methylglyoxal degradation; (R)-lactate from methylglyoxal: step 2/2. Its function is as follows. Thiolesterase that catalyzes the hydrolysis of S-D-lactoyl-glutathione to form glutathione and D-lactic acid. The protein is Hydroxyacylglutathione hydrolase of Escherichia coli (strain ATCC 8739 / DSM 1576 / NBRC 3972 / NCIMB 8545 / WDCM 00012 / Crooks).